The chain runs to 337 residues: Angiopoietin-related protein 7 (337 aa).

The first 21 residues, 1 to 21 (MLRETWLCVILVAFVSHPVWL), serve as a signal peptide directing secretion. The stretch at 30–110 (QLKAAGCCEE…DIMQLQAAQT (81 aa)) forms a coiled coil. N-linked (GlcNAc...) asparagine glycosylation occurs at N49. The Fibrinogen C-terminal domain occupies 113-334 (QTSADAIYDC…RVEMKIRPEA (222 aa)). The cysteines at positions 122 and 153 are disulfide-linked. N-linked (GlcNAc...) asparagine glycosylation is found at N244 and N258. The cysteines at positions 276 and 289 are disulfide-linked. An N-linked (GlcNAc...) asparagine glycan is attached at N320.

Homotetramer; disulfide-linked.

The protein localises to the secreted. Has a role in the formation and organization of the extracellular matrix. In the eye, it functions as a mediator of dexamethasone-induced matrix deposition in the trabecular meshwork, the tissue responsible for the outflow of the ocular aqueous humor and for the maintenance of intraocular pressure. Is a negative regulator of angiogenesis in the cornea, and plays a major role in maintaining corneal avascularity and transparency. The protein is Angiopoietin-related protein 7 (Angptl7) of Mus musculus (Mouse).